The chain runs to 609 residues: Glutamine--fructose-6-phosphate aminotransferase [isomerizing] (609 aa).

The Nucleophile; for GATase activity role is filled by C2. In terms of domain architecture, Glutamine amidotransferase type-2 spans 2-218 (CGIVGAIAQR…EGDIAEITRR (217 aa)). 2 consecutive SIS domains span residues 286–426 (ADEL…LKGL) and 458–599 (LAED…VDQP). The active-site For Fru-6P isomerization activity is K604.

As to quaternary structure, homodimer. In pull-down experiments interacts with CedA.

The protein resides in the cytoplasm. It carries out the reaction D-fructose 6-phosphate + L-glutamine = D-glucosamine 6-phosphate + L-glutamate. Catalyzes the first step in hexosamine metabolism, converting fructose-6P into glucosamine-6P using glutamine as a nitrogen source. The polypeptide is Glutamine--fructose-6-phosphate aminotransferase [isomerizing] (glmS) (Escherichia coli (strain K12)).